Here is a 326-residue protein sequence, read N- to C-terminus: NADH-specific methylglyoxal reductase (326 aa).

Residues 20–21 (TW) and aspartate 54 contribute to the NAD(+) site. Residue tyrosine 59 is the Proton donor of the active site. NAD(+) is bound by residues glutamine 189, 217–222 (YSPLEQ), glycine 291, and glutamine 297.

It belongs to the aldo/keto reductase family. Aldo/keto reductase 11 subfamily. Monomer.

The catalysed reaction is hydroxyacetone + NAD(+) = methylglyoxal + NADH + H(+). Catalyzes the NADH-dependent reduction of methylglyoxal (2-oxopropanal) in vitro. It is not known if this activity has physiological significance. Cannot use NADPH as a cosubstrate. Seems to play some role in intestinal colonization. In Escherichia coli (strain K12), this protein is NADH-specific methylglyoxal reductase (ydjG).